Here is a 101-residue protein sequence, read N- to C-terminus: Trp operon repressor homolog (101 aa).

The DNA-binding element occupies 59–82 (QREIAQKYGVSIAQITRGSNALKA).

Belongs to the TrpR family. Homodimer.

It is found in the cytoplasm. In terms of biological role, this protein is an aporepressor. When complexed with L-tryptophan it binds the operator region of the trp operon and prevents the initiation of transcription. In Chlamydia caviae (strain ATCC VR-813 / DSM 19441 / 03DC25 / GPIC) (Chlamydophila caviae), this protein is Trp operon repressor homolog.